A 168-amino-acid polypeptide reads, in one-letter code: Photosystem I assembly protein Ycf3 (168 aa).

TPR repeat units follow at residues 35–68 (AFTY…EIDP), 72–105 (SYIL…NPFL), and 120–153 (GEKA…TPGN).

It belongs to the Ycf3 family.

It localises to the plastid membrane. Functionally, essential for the assembly of the photosystem I (PSI) complex. May act as a chaperone-like factor to guide the assembly of the PSI subunits. The chain is Photosystem I assembly protein Ycf3 from Cuscuta exaltata (Tall dodder).